The following is a 1389-amino-acid chain: DNA-directed RNA polymerase subunit beta'' (1389 aa).

Cys-220, Cys-290, Cys-297, and Cys-300 together coordinate Zn(2+).

This sequence belongs to the RNA polymerase beta' chain family. RpoC2 subfamily. In terms of assembly, in plastids the minimal PEP RNA polymerase catalytic core is composed of four subunits: alpha, beta, beta', and beta''. When a (nuclear-encoded) sigma factor is associated with the core the holoenzyme is formed, which can initiate transcription. Requires Zn(2+) as cofactor.

It localises to the plastid. The protein localises to the chloroplast. It carries out the reaction RNA(n) + a ribonucleoside 5'-triphosphate = RNA(n+1) + diphosphate. In terms of biological role, DNA-dependent RNA polymerase catalyzes the transcription of DNA into RNA using the four ribonucleoside triphosphates as substrates. The chain is DNA-directed RNA polymerase subunit beta'' from Chloranthus spicatus (Chulantree).